The following is a 237-amino-acid chain: Protein lin-31 (237 aa).

Positions glutamine 12–leucine 103 form a DNA-binding region, fork-head. Disordered regions lie at residues arginine 110 to glutamate 141 and asparagine 195 to serine 237. 2 stretches are compositionally biased toward low complexity: residues serine 206–serine 216 and serine 227–serine 237.

It localises to the nucleus. Functionally, lin-31 regulates how vulval precursor cells choose their fate. It helps specify three alternative cell fates in vulval development. The chain is Protein lin-31 (lin-31) from Caenorhabditis elegans.